Consider the following 141-residue polypeptide: Hemoglobin subunit alpha (141 aa).

In terms of domain architecture, Globin spans 2–141 (AFTACEKQTI…ICQELSSRYR (140 aa)). Histidine 59 serves as a coordination point for O2. Position 88 (histidine 88) interacts with heme b.

It belongs to the globin family. In terms of assembly, heterotetramer of two alpha chains and two beta chains. As to expression, red blood cells.

Its function is as follows. Involved in oxygen transport from gills to the various peripheral tissues. The polypeptide is Hemoglobin subunit alpha (HBA) (Mustelus griseus (Spotless smooth-hound)).